The following is a 192-amino-acid chain: Small ribosomal subunit protein bS16 (192 aa).

Residues 149–161 show a composition bias toward basic and acidic residues; it reads EKKAAEAKAKAEA. Positions 149–192 are disordered; that stretch reads EKKAAEAKAKAEAEAAAAAEEATETEETPMEAAAEEAPAAESAE. Residues 178–192 are compositionally biased toward low complexity; that stretch reads MEAAAEEAPAAESAE.

The protein belongs to the bacterial ribosomal protein bS16 family.

In Porphyromonas gingivalis (strain ATCC 33277 / DSM 20709 / CIP 103683 / JCM 12257 / NCTC 11834 / 2561), this protein is Small ribosomal subunit protein bS16.